Consider the following 200-residue polypeptide: Formate dehydrogenase iron-sulfur subunit (200 aa).

4Fe-4S ferredoxin-type domains are found at residues V7 to N37, G50 to D81, and G82 to S111. 16 residues coordinate [4Fe-4S] cluster: C16, C19, C22, C26, C59, C62, C67, C71, C91, C94, C97, C101, C123, C126, C155, and C159.

Formate dehydrogenase is a membrane-bound complex, formed of at least three different subunits. The cofactor is [4Fe-4S] cluster.

This chain is an electron transfer unit containing 18 cysteine residues, 16 of which occur in four clusters. This is Formate dehydrogenase iron-sulfur subunit (fdhB1) from Wolinella succinogenes (strain ATCC 29543 / DSM 1740 / CCUG 13145 / JCM 31913 / LMG 7466 / NCTC 11488 / FDC 602W) (Vibrio succinogenes).